Consider the following 86-residue polypeptide: Small ribosomal subunit protein bS20 (86 aa).

The segment at 1–26 (MANIKSAKKRALQSEKSRKHNASRRT) is disordered.

It belongs to the bacterial ribosomal protein bS20 family.

In terms of biological role, binds directly to 16S ribosomal RNA. The polypeptide is Small ribosomal subunit protein bS20 (Psychromonas ingrahamii (strain DSM 17664 / CCUG 51855 / 37)).